We begin with the raw amino-acid sequence, 103 residues long: Large ribosomal subunit protein bL21 (103 aa).

Belongs to the bacterial ribosomal protein bL21 family. Part of the 50S ribosomal subunit. Contacts protein L20.

In terms of biological role, this protein binds to 23S rRNA in the presence of protein L20. The chain is Large ribosomal subunit protein bL21 from Alteromonas mediterranea (strain DSM 17117 / CIP 110805 / LMG 28347 / Deep ecotype).